Consider the following 865-residue polypeptide: Bifunctional uridylyltransferase/uridylyl-removing enzyme (865 aa).

The tract at residues 1 to 318 (MPHVDLNPLK…FPRPDSDARL (318 aa)) is uridylyltransferase. Residues 319 to 675 (IDDDFRNLRE…VRPTEHGEGL (357 aa)) form a uridylyl-removing region. Residues 437-559 (VDQHTLAVVR…VGDERRLAAL (123 aa)) form the HD domain. ACT domains lie at 676 to 762 (QVMV…RLPH) and 789 to 865 (RLSV…QQAA). The interval 747 to 767 (DPHAARHAHAPRRLPHSHARR) is disordered. Residues 751 to 767 (ARHAHAPRRLPHSHARR) show a composition bias toward basic residues.

The protein belongs to the GlnD family. Mg(2+) serves as cofactor.

It carries out the reaction [protein-PII]-L-tyrosine + UTP = [protein-PII]-uridylyl-L-tyrosine + diphosphate. It catalyses the reaction [protein-PII]-uridylyl-L-tyrosine + H2O = [protein-PII]-L-tyrosine + UMP + H(+). Its activity is regulated as follows. Uridylyltransferase (UTase) activity is inhibited by glutamine, while glutamine activates uridylyl-removing (UR) activity. Its function is as follows. Modifies, by uridylylation and deuridylylation, the PII regulatory proteins (GlnB and homologs), in response to the nitrogen status of the cell that GlnD senses through the glutamine level. Under low glutamine levels, catalyzes the conversion of the PII proteins and UTP to PII-UMP and PPi, while under higher glutamine levels, GlnD hydrolyzes PII-UMP to PII and UMP (deuridylylation). Thus, controls uridylylation state and activity of the PII proteins, and plays an important role in the regulation of nitrogen assimilation and metabolism. The sequence is that of Bifunctional uridylyltransferase/uridylyl-removing enzyme from Bordetella pertussis (strain Tohama I / ATCC BAA-589 / NCTC 13251).